The following is a 317-amino-acid chain: Methionyl-tRNA formyltransferase (317 aa).

(6S)-5,6,7,8-tetrahydrofolate is bound at residue 111-114 (SLLP).

This sequence belongs to the Fmt family.

It carries out the reaction L-methionyl-tRNA(fMet) + (6R)-10-formyltetrahydrofolate = N-formyl-L-methionyl-tRNA(fMet) + (6S)-5,6,7,8-tetrahydrofolate + H(+). Attaches a formyl group to the free amino group of methionyl-tRNA(fMet). The formyl group appears to play a dual role in the initiator identity of N-formylmethionyl-tRNA by promoting its recognition by IF2 and preventing the misappropriation of this tRNA by the elongation apparatus. The polypeptide is Methionyl-tRNA formyltransferase (Chlorobium phaeobacteroides (strain BS1)).